The chain runs to 637 residues: Multicopper oxidase LPR1 homolog 5 (637 aa).

An N-terminal signal peptide occupies residues Met1–Ala21. N-linked (GlcNAc...) asparagine glycosylation occurs at Asn100. Cu cation is bound by residues His209 and His211. A glycan (N-linked (GlcNAc...) asparagine) is linked at Asn234. Cu cation-binding residues include His257 and His259. N-linked (GlcNAc...) asparagine glycosylation is found at Asn308, Asn349, Asn357, Asn425, Asn482, and Asn516. Residues Pro334–Ala406 form the Plastocyanin-like domain. His522, His525, and His527 together coordinate Cu cation. N-linked (GlcNAc...) asparagine glycosylation occurs at Asn553. Cu cation contacts are provided by His618, Cys619, His620, His624, and Met629.

It belongs to the multicopper oxidase family. The cofactor is Cu cation. Highly expressed in roots and basal stems.

Its subcellular location is the endoplasmic reticulum membrane. Its function is as follows. Multicopper oxidase that may play a role in the maintenance of inorganic phosphate homeostasis. The protein is Multicopper oxidase LPR1 homolog 5 of Oryza sativa subsp. japonica (Rice).